The primary structure comprises 376 residues: Multiphosphoryl transfer protein (376 aa).

The 141-residue stretch at 2–142 (FQLSVQDIHP…EELRALLMGE (141 aa)) folds into the PTS EIIA type-2 domain. The Tele-phosphohistidine intermediate; for EIIA activity role is filled by histidine 62. Histidine 62 is modified (phosphohistidine; by HPr). Residues 156–284 (TLDIVASDLL…LTSDDAPTDD (129 aa)) form a m domain region. Residues 285–375 (VLSAEFVVRN…DAIAAGLGEG (91 aa)) form the HPr domain. Catalysis depends on histidine 299, which acts as the Pros-phosphohistidine intermediate; for HPr activity. Histidine 299 carries the phosphohistidine; by EI modification.

The protein resides in the cytoplasm. Functionally, the phosphoenolpyruvate-dependent sugar phosphotransferase system (sugar PTS), a major carbohydrate active transport system, catalyzes the phosphorylation of incoming sugar substrates concomitantly with their translocation across the cell membrane. The enzyme II FruAB PTS system is involved in fructose transport. The chain is Multiphosphoryl transfer protein from Escherichia coli O157:H7.